The primary structure comprises 320 residues: Cytochrome c biogenesis protein CcsA (320 aa).

The next 8 helical transmembrane spans lie at 9–29 (ILIH…FLTL), 44–64 (GMIV…IYSG), 71–91 (LYES…VCYF), 99–119 (LNAI…SGLL), 144–164 (MVLG…LLVI), 226–246 (IISL…VWAN), 261–281 (WAFI…NINL), and 287–307 (AIVA…VNLL).

Belongs to the CcmF/CycK/Ccl1/NrfE/CcsA family. In terms of assembly, may interact with Ccs1.

It is found in the plastid. The protein localises to the chloroplast thylakoid membrane. Functionally, required during biogenesis of c-type cytochromes (cytochrome c6 and cytochrome f) at the step of heme attachment. The chain is Cytochrome c biogenesis protein CcsA from Carica papaya (Papaya).